The primary structure comprises 341 residues: uncharacterized protein (341 aa).

This is an uncharacterized protein from Treponema pallidum (strain Nichols).